The sequence spans 302 residues: MPAVVRGGPPKPRRPRAEAPASPSKGKPAPRKAQPAAKLHAARGVGLSPTVALSVAGAALGLGLVVMLATGHRAERLGASMVRGVDNTFASAGFRLKTVHIRGASATAQADILKASGLYLDQPTLGMDLADVRDRVQGVGWVKDAKVVRMLPDTVLIAVEERPALAVWQNHGRMKVIDSEGQVITEADPARFPQLPLVVGQGADQAAGLILPAVASRPRLRDRLEAMVRVDERRWDLRLKDGSLIQLPAIDEESALIQLDQLDQRQRILDMGFARIDLRDPEMVAVRPRDAVLPGQPAADGA.

The tract at residues 1 to 41 (MPAVVRGGPPKPRRPRAEAPASPSKGKPAPRKAQPAAKLHA) is disordered. Over 1–50 (MPAVVRGGPPKPRRPRAEAPASPSKGKPAPRKAQPAAKLHAARGVGLSPT) the chain is Cytoplasmic. The span at 18-38 (EAPASPSKGKPAPRKAQPAAK) shows a compositional bias: low complexity. A helical transmembrane segment spans residues 51–71 (VALSVAGAALGLGLVVMLATG). The Periplasmic segment spans residues 72-302 (HRAERLGASM…LPGQPAADGA (231 aa)). The POTRA domain occupies 94 to 162 (FRLKTVHIRG…DTVLIAVEER (69 aa)).

The protein belongs to the FtsQ/DivIB family. FtsQ subfamily.

It is found in the cell inner membrane. In terms of biological role, essential cell division protein. This is Cell division protein FtsQ from Caulobacter vibrioides (strain ATCC 19089 / CIP 103742 / CB 15) (Caulobacter crescentus).